Reading from the N-terminus, the 6885-residue chain is Nesprin-2 (6885 aa).

Residues 1–286 form an actin-binding region; it reads MASSPELPTE…YVAQFLQYSK (286 aa). Residues 1–6834 lie on the Cytoplasmic side of the membrane; that stretch reads MASSPELPTE…QRSFLSRVVR (6834 aa). Calponin-homology (CH) domains are found at residues 31 to 136 and 181 to 286; these read DTQK…LHFH and MSAR…QYSK. Spectrin repeat units lie at residues 297 to 378, 379 to 472, 473 to 575, 576 to 680, 735 to 838, 839 to 932, and 933 to 1034; these read GKVK…HQIN, AWKI…RINN, ILEK…KNIY, NVKS…KQDQ, VAKD…KNLT, DVSP…LHHE, and LSLY…KCAS. The stretch at 297–6782 forms a coiled coil; sequence GKVKDAMGWL…PASPLPSFDE (6486 aa). Position 841 is a phosphoserine (Ser841). Residue Lys955 is modified to N6-acetyllysine. Residues 1042 to 1059 show a composition bias toward polar residues; that stretch reads PTAGGTSKNEGTITTSEN. Residues 1042 to 1084 form a disordered region; it reads PTAGGTSKNEGTITTSENRGGDPHSEAPFAKSDNQPSTEKAME. 12 Spectrin repeats span residues 1121–1212, 1263–1323, 1324–1419, 1420–1524, 1525–1636, 1637–1738, 1739–1830, 1831–1938, 1939–2036, 2037–2132, 2133–2243, and 2244–2360; these read TYRD…TLNT, NIQD…DTLK, ALED…YGVQ, EEFT…ALVT, ECLE…KTED, YYEN…TGES, NCHA…TKKS, VLQD…AKEL, EDSL…EEED, KLLP…LAST, YLSH…SVQN, and LDGH…LNSI. Residues 2368 to 2382 show a composition bias toward basic and acidic residues; it reads EKKGKFTLPGREKQA. Positions 2368 to 2394 are disordered; the sequence is EKKGKFTLPGREKQATSDVQESTQESA. Residues 2383 to 2393 are compositionally biased toward polar residues; that stretch reads TSDVQESTQES. 16 Spectrin repeats span residues 2432 to 2513, 2514 to 2620, 2621 to 2717, 2718 to 2831, 2832 to 2933, 2934 to 3036, 3037 to 3142, 3143 to 3248, 3249 to 3352, 3353 to 3465, 3466 to 3573, 3574 to 3679, 3680 to 3777, 3778 to 3880, 3881 to 3986, and 3987 to 4086; these read DERK…TLKK, NKES…KYSQ, QVVE…ETLE, PLHL…QLEF, KLEE…FIQN, TCNE…EKIK, QLDT…NMVL, ELSP…DLRT, NVLN…AQET, EAER…MWCE, ELKQ…KVQK, NKEL…SNEV, LKSS…ECRT, SQLN…KIME, SLPQ…VTQE, and QNEL…LPAV. Ser2781 carries the post-translational modification Phosphoserine. Composition is skewed to basic and acidic residues over residues 4073 to 4083 and 4093 to 4102; these read QEQEGVERDRL and VAERDASERK. Disordered stretches follow at residues 4073-4162, 4184-4232, 4335-4363, and 4416-4448; these read QEQE…SGTI, DSLN…KTRP, EKHS…PVNL, and HDND…QGQN. Phosphoserine is present on Ser4108. Basic and acidic residues-rich tracts occupy residues 4122 to 4134 and 4144 to 4155; these read SSVK…EKAE and WKHDKDMEEDRA. The Spectrin 36 repeat unit spans residues 4229–4348; it reads KTRPEPTEVL…EDQHPTILKK (120 aa). Basic and acidic residues predominate over residues 4335-4356; that stretch reads EKHSEDQHPTILKKSSEPEHQE. The span at 4421–4434 shows a compositional bias: polar residues; that stretch reads TQESSASNQASSPE. Spectrin repeat units follow at residues 4520–4639, 4640–4727, 4728–4837, 4838–4943, 4944–5051, 5052–5164, 5165–5266, 5267–5391, 5392–5487, 5488–5589, 5590–5704, 5705–5799, 5800–5907, 5908–6017, 6018–6135, 6136–6243, and 6244–6355; these read NMTE…RSYQ, NEIK…RARY, TELS…QSLL, QKWE…QALL, KHLL…QEKL, HQLQ…KIQH, LEQL…TQVN, QLKT…KAYS, NAHG…MLLV, KANE…CSEL, QGIG…QWQD, FTTS…PQLA, EMIK…RVAI, RKQE…VKKL, KETF…EETW, RLWQ…LRHF, and TNQR…PGLE. A Phosphoserine modification is found at Ser5785. The span at 6354–6367 shows a compositional bias: acidic residues; it reads LEDEKEASENETDM. Positions 6354 to 6508 are disordered; sequence LEDEKEASEN…GTDGGKEGPR (155 aa). Residues Ser6361, Ser6384, Ser6411, Ser6428, Ser6429, Ser6430, and Ser6459 each carry the phosphoserine modification. The span at 6368–6384 shows a compositional bias: basic and acidic residues; it reads EDPREIQTDSWRKRGES. Spectrin repeat units lie at residues 6461–6549, 6550–6665, and 6666–6782; these read SCPE…KLKI, KQNL…QCQD, and FHQL…SFDE. Basic and acidic residues predominate over residues 6463–6474; that stretch reads PEHHYKQMEGDR. Residues 6477 to 6489 are compositionally biased toward pro residues; sequence PPVPPASSTPYKP. Low complexity predominate over residues 6490–6499; sequence PYGKLLLPPG. The segment at 6769–6824 is disordered; the sequence is GTQNPASPLPSFDEVDSGDQPPATSVPAPRAKQFRAVRTTEGEEETESRVPGSTRP. A KASH domain is found at 6826 to 6885; the sequence is RSFLSRVVRAALPLQLLLLLLLLLACLLPSSEEDYSCTQANNFARSFYPMLRYTNGPPPT. A helical; Anchor for type IV membrane protein transmembrane segment spans residues 6835 to 6855; it reads AALPLQLLLLLLLLLACLLPS. Residues 6856-6885 are Perinuclear space-facing; it reads SEEDYSCTQANNFARSFYPMLRYTNGPPPT. Residues 6872-6885 form a sufficient for interaction with SUN2 region; sequence FYPMLRYTNGPPPT.

Belongs to the nesprin family. As to quaternary structure, core component of LINC complexes which are composed of inner nuclear membrane SUN domain-containing proteins coupled to outer nuclear membrane KASH domain-containing nesprins. SUN and KASH domain-containing proteins seem to bind each other promiscuously; however, some LINC complex constituents are tissue- or cell type-specific. At least SUN1/2-containing core LINC complexes are proposed to be hexameric composed of three protomers of each KASH and SUN domain-containing protein. The SUN2:SYNE2/KASH2 complex is a heterohexamer; the homotrimeric cloverleave-like conformation of the SUN domain is a prerequisite for LINC complex formation in which three separate SYNE2/KASH2 peptides bind at the interface of adjacent SUN domains. Interacts with EMD, LMNA, MKS3 and F-actin via its N-terminal domain. Interacts with DCTN1 and DYNC1I1/2; suggesting the association with the dynein-dynactin motor complex. Associates with kinesin motor complexes. Interacts with TMEM67. Interacts (via KASH domain) with TMEM258. Interacts with BROX; this interaction promotes SYN2 ubiquitination and facilitates the relaxation of mechanical stress imposed by compressive actin fibers at the rupture site. Post-translationally, the disulfid bond with SUN2 is required for stability of the SUN2:SYNE2/KASH2 LINC complex under tensile forces though not required for the interaction. In terms of processing, ubiquitinated, targeting it for degradation. Widely expressed, with higher level in kidney, adult and fetal liver, stomach and placenta. Weakly expressed in skeletal muscle and brain. Isoform 5 is highly expressed in pancreas, skeletal muscle and heart.

Its subcellular location is the nucleus outer membrane. The protein localises to the sarcoplasmic reticulum membrane. It is found in the cell membrane. The protein resides in the cytoplasm. It localises to the cytoskeleton. Its subcellular location is the mitochondrion. The protein localises to the nucleus. It is found in the nucleoplasm. The protein resides in the myofibril. It localises to the sarcomere. Its subcellular location is the z line. The protein localises to the cell junction. It is found in the focal adhesion. Its function is as follows. Multi-isomeric modular protein which forms a linking network between organelles and the actin cytoskeleton to maintain the subcellular spatial organization. As a component of the LINC (LInker of Nucleoskeleton and Cytoskeleton) complex involved in the connection between the nuclear lamina and the cytoskeleton. The nucleocytoplasmic interactions established by the LINC complex play an important role in the transmission of mechanical forces across the nuclear envelope and in nuclear movement and positioning. Specifically, SYNE2 and SUN2 assemble in arrays of transmembrane actin-associated nuclear (TAN) lines which are bound to F-actin cables and couple the nucleus to retrograde actin flow during actin-dependent nuclear movement. May be involved in nucleus-centrosome attachment. During interkinetic nuclear migration (INM) at G2 phase and nuclear migration in neural progenitors its LINC complex association with SUN1/2 and probable association with cytoplasmic dynein-dynactin motor complexes functions to pull the nucleus toward the centrosome; SYNE1 and SYNE2 may act redundantly. During INM at G1 phase mediates respective LINC complex association with kinesin to push the nucleus away from the centrosome. Involved in nuclear migration in retinal photoreceptor progenitors. Required for centrosome migration to the apical cell surface during early ciliogenesis. Facilitates the relaxation of mechanical stress imposed by compressive actin fibers at the rupture site through its nteraction with SYN2. The chain is Nesprin-2 from Homo sapiens (Human).